Reading from the N-terminus, the 526-residue chain is Lysine--tRNA ligase (526 aa).

The Mg(2+) site is built by E431 and E438.

It belongs to the class-II aminoacyl-tRNA synthetase family. As to quaternary structure, homodimer. It depends on Mg(2+) as a cofactor.

It localises to the cytoplasm. It carries out the reaction tRNA(Lys) + L-lysine + ATP = L-lysyl-tRNA(Lys) + AMP + diphosphate. The protein is Lysine--tRNA ligase of Chlamydia trachomatis serovar L2b (strain UCH-1/proctitis).